The sequence spans 301 residues: uncharacterized protein (301 aa).

Residues 45 to 286 form the Radical SAM core domain; that stretch reads KELSDGWALN…EELGKMFTEL (242 aa).

This is an uncharacterized protein from Acidianus two-tailed virus (ATV).